The following is a 298-amino-acid chain: Cytidine deaminase (298 aa).

CMP/dCMP-type deaminase domains follow at residues 47–167 and 186–298; these read TEQQ…FGPS and DSDD…PLLG. 88–90 serves as a coordination point for substrate; it reads NLE. Zn(2+) is bound at residue H101. E103 (proton donor) is an active-site residue. C128 and C131 together coordinate Zn(2+).

This sequence belongs to the cytidine and deoxycytidylate deaminase family. Homodimer. Zn(2+) is required as a cofactor.

It carries out the reaction cytidine + H2O + H(+) = uridine + NH4(+). It catalyses the reaction 2'-deoxycytidine + H2O + H(+) = 2'-deoxyuridine + NH4(+). In terms of biological role, this enzyme scavenges exogenous and endogenous cytidine and 2'-deoxycytidine for UMP synthesis. The protein is Cytidine deaminase of Shewanella frigidimarina (strain NCIMB 400).